We begin with the raw amino-acid sequence, 406 residues long: COP9 signalosome complex subunit 4 (406 aa).

Residue A2 is modified to N-acetylalanine. K25 is subject to N6-acetyllysine. The 170-residue stretch at 197–366 (YRRKFIEAAQ…GIVHFETREA (170 aa)) folds into the PCI domain.

The protein belongs to the CSN4 family. In terms of assembly, component of the CSN complex, composed of COPS1/GPS1, COPS2, COPS3, COPS4, COPS5, COPS6, COPS7 (COPS7A or COPS7B), COPS8 and COPS9. In the complex, it probably interacts directly with COPS1, COPS2, COPS3, COPS5, COPS6, COPS7 (COPS7A or COPS7B) and COPS8. Interacts with TOR1A; the interaction is direct and associates TOR1A and SNAPIN with the CSN complex. Interacts with STON2; controls STON2 neddylation levels. Interacts with ERCC6.

Its subcellular location is the cytoplasm. It localises to the nucleus. The protein resides in the cytoplasmic vesicle. It is found in the secretory vesicle. The protein localises to the synaptic vesicle. Component of the COP9 signalosome complex (CSN), a complex involved in various cellular and developmental processes. The CSN complex is an essential regulator of the ubiquitin (Ubl) conjugation pathway by mediating the deneddylation of the cullin subunits of SCF-type E3 ligase complexes, leading to decrease the Ubl ligase activity of SCF-type complexes such as SCF, CSA or DDB2. Also involved in the deneddylation of non-cullin subunits such as STON2. The complex is also involved in phosphorylation of p53/TP53, c-jun/JUN, IkappaBalpha/NFKBIA, ITPK1, IRF8/ICSBP and SNAPIN, possibly via its association with CK2 and PKD kinases. CSN-dependent phosphorylation of TP53 and JUN promotes and protects degradation by the Ubl system, respectively. The protein is COP9 signalosome complex subunit 4 (Cops4) of Rattus norvegicus (Rat).